A 311-amino-acid polypeptide reads, in one-letter code: p-hydroxybenzoic acid efflux pump subunit AaeA (311 aa).

Residues 11–31 (IAITLILVLLGIIAIFKAWVF) form a helical membrane-spanning segment.

The protein belongs to the membrane fusion protein (MFP) (TC 8.A.1) family.

It localises to the cell inner membrane. Functionally, forms an efflux pump with AaeB. The protein is p-hydroxybenzoic acid efflux pump subunit AaeA of Serratia proteamaculans (strain 568).